A 364-amino-acid chain; its full sequence is Transcription factor IIIA (364 aa).

9 C2H2-type zinc fingers span residues 38-62 (FICSFPDCSASYNKAWKLDAHLCKH), 68-92 (FVCDYEGCGKAFIRDYHLSRHVLIH), 98-123 (FVCADDGCNQKFNTKSNLKKHIERKH), 130-154 (YVCSYEGCKKAFKKHQQLRTHQCQH), 160-184 (FRCTHEGCGKHFASPSRLKRHGKVH), 187-211 (YLCQKGCSFMGKTWTELLKHMREAH), 215-237 (ITCNVCQRMFKRRDYLKQHMKTH), 244-269 (YRCPRQGCGRTYTTVFNLQSHILSFH), and 275-299 (FVCEHAGCGKTFAMKQSLMRHSVVH). A disordered region spans residues 299-364 (HDPDKKRMKL…PPPAALLTVC (66 aa)). The segment covering 338-352 (SLPNASAESSSSPEA) has biased composition (low complexity).

The protein localises to the nucleus. In terms of biological role, involved in ribosomal large subunit biogenesis. Binds the approximately 50 base pairs internal control region (ICR) of 5S ribosomal RNA genes. It is required for their RNA polymerase III-dependent transcription and may also maintain the transcription of other genes. Also binds the transcribed 5S RNA's. This chain is Transcription factor IIIA (Gtf3a), found in Mus musculus (Mouse).